The following is a 524-amino-acid chain: Solute carrier family 2, facilitated glucose transporter member 2 (524 aa).

Residues 1 to 6 (MTEDKI) are Cytoplasmic-facing. The helical transmembrane segment at 7 to 26 (TGTLVFAVLTAVLGSFQFGY) threads the bilayer. Residues 27–89 (DIGVINAPQQ…SWAEEETTAS (63 aa)) are Extracellular-facing. Asn-62 is a glycosylation site (N-linked (GlcNAc...) asparagine). A helical transmembrane segment spans residues 90–115 (ASLIIMLWSLSVSIFAIGGMIASFFG). At 116–126 (GMLGDRLGRIK) the chain is on the cytoplasmic side. The chain crosses the membrane as a helical span at residues 127–145 (AMLVANILSLVGALLMWFS). Over 146 to 150 (KLGPS) the chain is Extracellular. The helical transmembrane segment at 151-176 (HILIISGRGISGLYCGLISGLVPMYI) threads the bilayer. Topologically, residues 177-187 (GEIAPTKFRGA) are cytoplasmic. Residues 188-211 (IGALHQLAIVTGILVSQIIGLDFL) form a helical membrane-spanning segment. Position 193 (Gln-193) interacts with D-glucose. Residues 212–216 (LGNHE) are Extracellular-facing. The chain crosses the membrane as a helical span at residues 217–239 (LWHILLGLSAVPAVLQSLMLFFC). At 240 to 303 (PESPRYLYIK…LFTNSSYRQP (64 aa)) the chain is on the cytoplasmic side. A helical membrane pass occupies residues 304–327 (ILVALMLHMAQQFSGINGIFYYST). D-glucose-binding positions include 314–315 (QQ) and Asn-320. The Extracellular portion of the chain corresponds to 328–338 (SIFQTAGISQP). Residues 339–360 (VYATIGVGAINTIFTALSVFLV) traverse the membrane as a helical segment. Asn-349 contributes to the D-glucose binding site. The Cytoplasmic portion of the chain corresponds to 361 to 366 (EKAGRR). Residues 367-389 (SLFLIGMSGMFVCAIFMSVGLVL) traverse the membrane as a helical segment. Topologically, residues 390–394 (LDKLP) are extracellular. A helical membrane pass occupies residues 395–413 (WMSYVSMTAIFLFVSFFEI). Residues Glu-412 and Trp-420 each contribute to the D-glucose site. The Cytoplasmic portion of the chain corresponds to 414–433 (GPGPIPWFMVAEFFSQGPRP). Residues 434–458 (AALAMAAFSNWTCNFIIALCFQYIA) form a helical membrane-spanning segment. At 459 to 463 (DFCGP) the chain is on the extracellular side. Residues 464–482 (YVFFLFAGVVLVFTLFTFF) form a helical membrane-spanning segment. Residues 483–524 (KVPETKGKSFEEIAAEFQKKSGSAQSPKAAVEMEFLGATETV) are Cytoplasmic-facing. Thr-523 carries the phosphothreonine modification.

This sequence belongs to the major facilitator superfamily. Sugar transporter (TC 2.A.1.1) family. Glucose transporter subfamily. Post-translationally, N-glycosylated; required for stability and retention at the cell surface of pancreatic beta cells.

The protein localises to the cell membrane. It catalyses the reaction D-glucose(out) = D-glucose(in). The catalysed reaction is D-fructose(out) = D-fructose(in). It carries out the reaction L-dehydroascorbate(out) = L-dehydroascorbate(in). The enzyme catalyses D-galactose(in) = D-galactose(out). Its activity is regulated as follows. D-glucose and maltose competitively inhibit fructose transport. D-glucose, D-fructose and maltose inhibit deoxyglucose transport. Its function is as follows. Facilitative hexose transporter that mediates the transport of glucose, fructose and galactose. Likely mediates the bidirectional transfer of glucose across the plasma membrane of hepatocytes and is responsible for uptake of glucose by the beta cells; may comprise part of the glucose-sensing mechanism of the beta cell. May also participate with the Na(+)/glucose cotransporter in the transcellular transport of glucose in the small intestine and kidney. Also able to mediate the transport of dehydroascorbate. This Sus scrofa (Pig) protein is Solute carrier family 2, facilitated glucose transporter member 2.